The following is a 306-amino-acid chain: MIKQRTLKQAAKVTGIGLHSGKKVTLTLRPAPAHTGIIYARTDLDPVVYFPASAESIRDTQLCTCMINDEGVRISTVEHLNAAMSALGLDNLIVEVDAAEIPIMDGSSSPFIYLLLDAGIEEQDAPKKFIRIKESVRVEEGDKWAEFKPYSHGLKLDFTIDFTHPMITKEVRNYKMEFSAQHFIQQLSRARTFTFMKDVEYLQSIGLALGGSLDNAIVLDEYRILNEEGLRFKDELVRHKMLDAVGDLFMCGYNILGDFKAYKSGHSLNNKLLRAVLANENAWEFVTFDDKAEVPQGYQVTEQVFI.

Positions 79, 239, and 243 each coordinate Zn(2+). H266 acts as the Proton donor in catalysis.

Belongs to the LpxC family. Requires Zn(2+) as cofactor.

The enzyme catalyses a UDP-3-O-[(3R)-3-hydroxyacyl]-N-acetyl-alpha-D-glucosamine + H2O = a UDP-3-O-[(3R)-3-hydroxyacyl]-alpha-D-glucosamine + acetate. The protein operates within glycolipid biosynthesis; lipid IV(A) biosynthesis; lipid IV(A) from (3R)-3-hydroxytetradecanoyl-[acyl-carrier-protein] and UDP-N-acetyl-alpha-D-glucosamine: step 2/6. In terms of biological role, catalyzes the hydrolysis of UDP-3-O-myristoyl-N-acetylglucosamine to form UDP-3-O-myristoylglucosamine and acetate, the committed step in lipid A biosynthesis. This Glaesserella parasuis serovar 5 (strain SH0165) (Haemophilus parasuis) protein is UDP-3-O-acyl-N-acetylglucosamine deacetylase.